The sequence spans 739 residues: NAD(P)H-quinone oxidoreductase subunit 5, chloroplastic (739 aa).

16 helical membrane-spanning segments follow: residues 9–29, 39–59, 89–109, 125–145, 147–167, 185–205, 219–239, 258–278, 280–300, 327–347, 354–374, 396–416, 425–445, 542–562, 610–630, and 719–739; these read WVIP…LFFI, IWAF…VQLS, IDPL…LVLI, FVYI…SNLI, IYFF…FWFT, GDFG…SLEF, NGIN…GAVA, TPIS…FLLA, LLPL…VGTI, LGYM…FHLI, ALLF…VGYS, STFL…CFWS, WLYS…TAFY, LFPL…GISF, SLAI…YSFF, and ISSY…FFLF.

The protein belongs to the complex I subunit 5 family. NDH is composed of at least 16 different subunits, 5 of which are encoded in the nucleus.

Its subcellular location is the plastid. It is found in the chloroplast thylakoid membrane. The enzyme catalyses a plastoquinone + NADH + (n+1) H(+)(in) = a plastoquinol + NAD(+) + n H(+)(out). It catalyses the reaction a plastoquinone + NADPH + (n+1) H(+)(in) = a plastoquinol + NADP(+) + n H(+)(out). In terms of biological role, NDH shuttles electrons from NAD(P)H:plastoquinone, via FMN and iron-sulfur (Fe-S) centers, to quinones in the photosynthetic chain and possibly in a chloroplast respiratory chain. The immediate electron acceptor for the enzyme in this species is believed to be plastoquinone. Couples the redox reaction to proton translocation, and thus conserves the redox energy in a proton gradient. This chain is NAD(P)H-quinone oxidoreductase subunit 5, chloroplastic (ndhF), found in Agrostis stolonifera (Creeping bentgrass).